Reading from the N-terminus, the 505-residue chain is MTTIEDFTSQYGLVQKIDAFGYMKYLAENPDAPRKHGKVVLVTADTPLKASRGEGKTTTTIALIDALNKRGIDATAVLRQPSMGITAAGSKGGASGGGKASLTHPELIDWGLCGEMGAIEAAQNLLVSFAEKAIDDGKLDTILVPRVSEVPSRSLRSTAVDYGKGNVPEKVVLTPTCELMQIVVLSRSMDEISERVSKMIAGTKDGKAVTFGEFVDLWRITGILADAVKPAKTETVNGSPVYVHGGPFANVSIGIPTLVSVEMACALHDVVIVEAGYGTDAGAQKWLDIACREYGAQWPSAAIVVTRASTWRDDPELAWRYPFHVQRLENLDIPTFPLINLWEGEDDQVPSLKATADELGFRTPIIGNLFRDGGEALAPQLDGFVDALQNGSMPAEPHSHKGMALTENAKWVAENAYGVPAERVIYKPGFTESVSEAMELCQSAGISLDDLAFVAVKSPATMTDNDRAPEEERTVALKKVEVHAGAGLVHVNLTTSLTTPMPKIV.

This sequence belongs to the formate--tetrahydrofolate ligase family.

The catalysed reaction is (6S)-5,6,7,8-tetrahydrofolate + formate + ATP = (6R)-10-formyltetrahydrofolate + ADP + phosphate. The protein operates within one-carbon metabolism; tetrahydrofolate interconversion. The protein is Formate--tetrahydrofolate ligase (fhs) of Bifidobacterium longum (strain NCC 2705).